The following is a 380-amino-acid chain: Cytochrome b (380 aa).

Helical transmembrane passes span 34-54, 78-99, 114-134, and 179-199; these read FGSL…LLAM, WLIR…YFHI, WNTG…GYVL, and FFAL…IHLT. Heme b contacts are provided by histidine 84 and histidine 98. Heme b-binding residues include histidine 183 and histidine 197. Histidine 202 contacts a ubiquinone. Transmembrane regions (helical) follow at residues 227-247, 289-309, 321-341, and 348-368; these read LKDI…ALFS, LGGV…PFLH, LSQL…WVGS, and FIII…VLFP.

The protein belongs to the cytochrome b family. The cytochrome bc1 complex contains 11 subunits: 3 respiratory subunits (MT-CYB, CYC1 and UQCRFS1), 2 core proteins (UQCRC1 and UQCRC2) and 6 low-molecular weight proteins (UQCRH/QCR6, UQCRB/QCR7, UQCRQ/QCR8, UQCR10/QCR9, UQCR11/QCR10 and a cleavage product of UQCRFS1). This cytochrome bc1 complex then forms a dimer. Requires heme b as cofactor.

The protein resides in the mitochondrion inner membrane. Component of the ubiquinol-cytochrome c reductase complex (complex III or cytochrome b-c1 complex) that is part of the mitochondrial respiratory chain. The b-c1 complex mediates electron transfer from ubiquinol to cytochrome c. Contributes to the generation of a proton gradient across the mitochondrial membrane that is then used for ATP synthesis. The protein is Cytochrome b (MT-CYB) of Halobaena caerulea (Blue petrel).